We begin with the raw amino-acid sequence, 264 residues long: Phosphonoacetaldehyde hydrolase (264 aa).

Aspartate 9 acts as the Nucleophile in catalysis. Mg(2+)-binding residues include aspartate 9 and alanine 11. The active-site Schiff-base intermediate with substrate is the lysine 50. Aspartate 183 contacts Mg(2+).

The protein belongs to the HAD-like hydrolase superfamily. PhnX family. In terms of assembly, homodimer. The cofactor is Mg(2+).

The catalysed reaction is phosphonoacetaldehyde + H2O = acetaldehyde + phosphate + H(+). Involved in phosphonate degradation. This is Phosphonoacetaldehyde hydrolase from Bacillus cytotoxicus (strain DSM 22905 / CIP 110041 / 391-98 / NVH 391-98).